Here is a 469-residue protein sequence, read N- to C-terminus: L-seryl-tRNA(Sec) selenium transferase (469 aa).

Lysine 295 carries the N6-(pyridoxal phosphate)lysine modification.

Belongs to the SelA family. Pyridoxal 5'-phosphate is required as a cofactor.

The protein localises to the cytoplasm. The catalysed reaction is L-seryl-tRNA(Sec) + selenophosphate + H(+) = L-selenocysteinyl-tRNA(Sec) + phosphate. Its pathway is aminoacyl-tRNA biosynthesis; selenocysteinyl-tRNA(Sec) biosynthesis; selenocysteinyl-tRNA(Sec) from L-seryl-tRNA(Sec) (bacterial route): step 1/1. In terms of biological role, converts seryl-tRNA(Sec) to selenocysteinyl-tRNA(Sec) required for selenoprotein biosynthesis. This is L-seryl-tRNA(Sec) selenium transferase from Methylocella silvestris (strain DSM 15510 / CIP 108128 / LMG 27833 / NCIMB 13906 / BL2).